The following is a 217-amino-acid chain: Probable GTP-binding protein EngB (217 aa).

In terms of domain architecture, EngB-type G spans 24 to 207 (SQPEICFAGR…HALIESWLIP (184 aa)). GTP is bound by residues 32–39 (GRSNAGKS), 59–63 (GRTQH), 81–84 (DLPG), 148–151 (TKCD), and 185–188 (LFSA). Residues S39 and T61 each coordinate Mg(2+).

The protein belongs to the TRAFAC class TrmE-Era-EngA-EngB-Septin-like GTPase superfamily. EngB GTPase family. The cofactor is Mg(2+).

Functionally, necessary for normal cell division and for the maintenance of normal septation. This is Probable GTP-binding protein EngB from Paraburkholderia xenovorans (strain LB400).